The primary structure comprises 283 residues: Phosphatidylglycerol--prolipoprotein diacylglyceryl transferase (283 aa).

4 helical membrane-spanning segments follow: residues 20–40, 60–80, 94–114, and 121–141; these read IGGFALRWYGFLIASAVIIGL, LVIWLVVAAIPSARLYYVAFE, IWQGGIAIHGALIGGTIAILV, and LSFWNLLDVLTPAVILGQAIG. Arginine 142 is an a 1,2-diacyl-sn-glycero-3-phospho-(1'-sn-glycerol) binding site. The next 3 membrane-spanning stretches (helical) occupy residues 183–203, 214–234, and 248–268; these read FLYESVWNLGIFAILIALFFY, GTITCVYLIGYSLGRVWIEGL, and QVVSITLVLLGTAGIVWLYLL.

The protein belongs to the Lgt family.

It localises to the cell inner membrane. The enzyme catalyses L-cysteinyl-[prolipoprotein] + a 1,2-diacyl-sn-glycero-3-phospho-(1'-sn-glycerol) = an S-1,2-diacyl-sn-glyceryl-L-cysteinyl-[prolipoprotein] + sn-glycerol 1-phosphate + H(+). It functions in the pathway protein modification; lipoprotein biosynthesis (diacylglyceryl transfer). Its function is as follows. Catalyzes the transfer of the diacylglyceryl group from phosphatidylglycerol to the sulfhydryl group of the N-terminal cysteine of a prolipoprotein, the first step in the formation of mature lipoproteins. This is Phosphatidylglycerol--prolipoprotein diacylglyceryl transferase from Synechocystis sp. (strain ATCC 27184 / PCC 6803 / Kazusa).